Here is a 404-residue protein sequence, read N- to C-terminus: Odorant receptor 67c (404 aa).

Topologically, residues 1 to 45 are cytoplasmic; sequence METAKDNTARTFMELMRVPVQFYRTIGEDIYAHRSTNPLKSLLFK. Residues 46–66 traverse the membrane as a helical segment; that stretch reads IYLYAGFINFNLLVIGELVFF. Residues 67–79 are Extracellular-facing; the sequence is YNSIQDFETIRLA. The helical transmembrane segment at 80 to 100 threads the bilayer; the sequence is IAVAPCIGFSLVADFKQAAMI. At 101 to 139 the chain is on the cytoplasmic side; that stretch reads RGKKTLIMLLDDLENMHPKTLAKQMEYKLPDFEKTMKRV. Residues 140 to 160 traverse the membrane as a helical segment; sequence INIFTFLCLAYTTTFSFYPAI. Over 161–204 the chain is Extracellular; sequence KASVKFNFLGYDTFDRNFGFLIWFPFDATRNNLIYWIMYWDIAH. A helical membrane pass occupies residues 205-225; the sequence is GAYLAGIAFLCADLLLVVVIT. Residues 226–277 are Cytoplasmic-facing; the sequence is QICMHFNYISMRLEDHPCNSNEDKENIEFLIGIIRYHDKCLKLCEHVNDLYS. The helical transmembrane segment at 278 to 298 threads the bilayer; it reads FSLLLNFLMASMQICFIAFQV. Topologically, residues 299 to 304 are extracellular; sequence TESTVE. The chain crosses the membrane as a helical span at residues 305 to 326; the sequence is VIIIYCIFLMTSMVQVFMVCYY. The Cytoplasmic portion of the chain corresponds to 327-373; it reads GDTLIAASLKVGDAAYNQKWFQCSKSYCTMLKLLIMRSQKPASIRPP. Residues 374-394 form a helical membrane-spanning segment; the sequence is TFPPISLVTYMKVISMSYQFF. Topologically, residues 395–404 are extracellular; it reads ALLRTTYSNN.

Belongs to the insect chemoreceptor superfamily. Heteromeric odorant receptor channel (TC 1.A.69) family. Or49a subfamily. Interacts with Orco. Complexes exist early in the endomembrane system in olfactory sensory neurons (OSNs), coupling these complexes to the conserved ciliary trafficking pathway. Expressed in olfactory sensory neurons in the antenna.

The protein localises to the cell membrane. Odorant receptor which mediates acceptance or avoidance behavior, depending on its substrates. The odorant receptor repertoire encodes a large collection of odor stimuli that vary widely in identity, intensity, and duration. May form a complex with Orco to form odorant-sensing units, providing sensitive and prolonged odorant signaling and calcium permeability. This is Odorant receptor 67c (Or67c) from Drosophila melanogaster (Fruit fly).